Reading from the N-terminus, the 215-residue chain is Cytochrome b6 (215 aa).

The chain crosses the membrane as a helical span at residues 32–52 (IFYCIGGIVFTSFLIQVASGF). Cysteine 35 is a heme c binding site. Heme b is bound by residues histidine 86 and histidine 100. The next 3 helical transmembrane spans lie at 90 to 110 (ASMM…TGGF), 116 to 136 (LTWV…VTGY), and 186 to 206 (LHTF…FLMI). 2 residues coordinate heme b: histidine 187 and histidine 202.

The protein belongs to the cytochrome b family. PetB subfamily. As to quaternary structure, the 4 large subunits of the cytochrome b6-f complex are cytochrome b6, subunit IV (17 kDa polypeptide, PetD), cytochrome f and the Rieske protein, while the 4 small subunits are PetG, PetL, PetM and PetN. The complex functions as a dimer. Requires heme b as cofactor. Heme c is required as a cofactor.

It localises to the plastid. The protein localises to the chloroplast thylakoid membrane. Its function is as follows. Component of the cytochrome b6-f complex, which mediates electron transfer between photosystem II (PSII) and photosystem I (PSI), cyclic electron flow around PSI, and state transitions. This Gracilaria tenuistipitata var. liui (Red alga) protein is Cytochrome b6.